A 461-amino-acid chain; its full sequence is Siroheme synthase (461 aa).

The precorrin-2 dehydrogenase /sirohydrochlorin ferrochelatase stretch occupies residues 1–204 (MDYFPIFCQL…GDTTQAQQQV (204 aa)). NAD(+)-binding positions include 22-23 (EV) and 43-44 (GR). A Phosphoserine modification is found at S128. The segment at 216–461 (GEVTLVGAGP…NWFRCEAASA (246 aa)) is uroporphyrinogen-III C-methyltransferase. P225 provides a ligand contact to S-adenosyl-L-methionine. D248 functions as the Proton acceptor in the catalytic mechanism. K270 (proton donor) is an active-site residue. S-adenosyl-L-methionine-binding positions include 301-303 (GGD), I306, 331-332 (TA), M382, and G411.

The protein in the N-terminal section; belongs to the precorrin-2 dehydrogenase / sirohydrochlorin ferrochelatase family. It in the C-terminal section; belongs to the precorrin methyltransferase family.

The catalysed reaction is uroporphyrinogen III + 2 S-adenosyl-L-methionine = precorrin-2 + 2 S-adenosyl-L-homocysteine + H(+). It catalyses the reaction precorrin-2 + NAD(+) = sirohydrochlorin + NADH + 2 H(+). The enzyme catalyses siroheme + 2 H(+) = sirohydrochlorin + Fe(2+). Its pathway is cofactor biosynthesis; adenosylcobalamin biosynthesis; precorrin-2 from uroporphyrinogen III: step 1/1. It participates in cofactor biosynthesis; adenosylcobalamin biosynthesis; sirohydrochlorin from precorrin-2: step 1/1. The protein operates within porphyrin-containing compound metabolism; siroheme biosynthesis; precorrin-2 from uroporphyrinogen III: step 1/1. It functions in the pathway porphyrin-containing compound metabolism; siroheme biosynthesis; siroheme from sirohydrochlorin: step 1/1. Its pathway is porphyrin-containing compound metabolism; siroheme biosynthesis; sirohydrochlorin from precorrin-2: step 1/1. Functionally, multifunctional enzyme that catalyzes the SAM-dependent methylations of uroporphyrinogen III at position C-2 and C-7 to form precorrin-2 via precorrin-1. Then it catalyzes the NAD-dependent ring dehydrogenation of precorrin-2 to yield sirohydrochlorin. Finally, it catalyzes the ferrochelation of sirohydrochlorin to yield siroheme. In Edwardsiella ictaluri (strain 93-146), this protein is Siroheme synthase.